The primary structure comprises 494 residues: Aspartyl/glutamyl-tRNA(Asn/Gln) amidotransferase subunit B (494 aa).

It belongs to the GatB/GatE family. GatB subfamily. In terms of assembly, heterotrimer of A, B and C subunits.

It carries out the reaction L-glutamyl-tRNA(Gln) + L-glutamine + ATP + H2O = L-glutaminyl-tRNA(Gln) + L-glutamate + ADP + phosphate + H(+). The catalysed reaction is L-aspartyl-tRNA(Asn) + L-glutamine + ATP + H2O = L-asparaginyl-tRNA(Asn) + L-glutamate + ADP + phosphate + 2 H(+). Its function is as follows. Allows the formation of correctly charged Asn-tRNA(Asn) or Gln-tRNA(Gln) through the transamidation of misacylated Asp-tRNA(Asn) or Glu-tRNA(Gln) in organisms which lack either or both of asparaginyl-tRNA or glutaminyl-tRNA synthetases. The reaction takes place in the presence of glutamine and ATP through an activated phospho-Asp-tRNA(Asn) or phospho-Glu-tRNA(Gln). In Protochlamydia amoebophila (strain UWE25), this protein is Aspartyl/glutamyl-tRNA(Asn/Gln) amidotransferase subunit B.